We begin with the raw amino-acid sequence, 145 residues long: Cell division protein SepF (145 aa).

Belongs to the SepF family. In terms of assembly, homodimer. Interacts with FtsZ.

The protein resides in the cytoplasm. Its function is as follows. Cell division protein that is part of the divisome complex and is recruited early to the Z-ring. Probably stimulates Z-ring formation, perhaps through the cross-linking of FtsZ protofilaments. Its function overlaps with FtsA. The chain is Cell division protein SepF from Lactobacillus acidophilus (strain ATCC 700396 / NCK56 / N2 / NCFM).